Consider the following 708-residue polypeptide: Protein psiF (708 aa).

Residues Met-1–Ala-19 form the signal peptide. Residues Asp-20–Gly-643 are Extracellular-facing. N-linked (GlcNAc...) asparagine glycans are attached at residues Asn-78, Asn-116, Asn-222, Asn-317, Asn-318, Asn-371, Asn-498, and Asn-600. The region spanning Thr-103–Lys-263 is the PA14 domain. A helical transmembrane segment spans residues Ile-644–Ile-664. Over Phe-665–Glu-708 the chain is Cytoplasmic. Positions Met-682 to Leu-702 are enriched in polar residues. Residues Met-682–Glu-708 are disordered.

This sequence belongs to the prespore-cell-inducing factor family. As to quaternary structure, forms a complex with dicB.

It localises to the membrane. It is found in the secreted. Its function is as follows. Acts as a quorum sensing protein regulating discoidin gene expression during growth and development. D.discoideum is a single-celled amoebae and switches to multicellular development when food becomes limited. As the growing cells reach a high density, they begin expressing discoidin genes. The ability of psiF/dicA to induce discoidin gene expression when present in conditioned medium, suggests that it allows cells to sense their local density. The chain is Protein psiF (psiF) from Dictyostelium discoideum (Social amoeba).